The following is a 323-amino-acid chain: DNA-directed RNA polymerase subunit alpha 1 (323 aa).

Positions 1-228 (MSNNNSKLEF…EQISVFVSLR (228 aa)) are alpha N-terminal domain (alpha-NTD). An alpha C-terminal domain (alpha-CTD) region spans residues 244 to 323 (IDPILLKPID…DNFRELVEGK (80 aa)).

Belongs to the RNA polymerase alpha chain family. Homodimer. The RNAP catalytic core consists of 2 alpha, 1 beta, 1 beta' and 1 omega subunit. When a sigma factor is associated with the core the holoenzyme is formed, which can initiate transcription.

The catalysed reaction is RNA(n) + a ribonucleoside 5'-triphosphate = RNA(n+1) + diphosphate. Its function is as follows. DNA-dependent RNA polymerase catalyzes the transcription of DNA into RNA using the four ribonucleoside triphosphates as substrates. The chain is DNA-directed RNA polymerase subunit alpha 1 from Francisella tularensis subsp. tularensis (strain FSC 198).